The chain runs to 795 residues: Toll-like receptor 6 (795 aa).

Positions 1–27 (MSQDRKPIVGSFHFVCALALIVGSMTP) are cleaved as a signal peptide. The Extracellular segment spans residues 28-584 (FSNELESMVD…FHMSPLSCDT (557 aa)). N-linked (GlcNAc...) asparagine glycosylation is present at Asn-42. LRR repeat units follow at residues 54–77 (TKALSLSQNSISELRMPDISFLSE), 78–101 (LRVLRLSHNRIRSLDFHVFLFNQD), 102–125 (LEYLDVSHNRLQNISCCPMASLRH), 126–150 (LDLSFNDFDVLPVCKEFGNLTKLTF), 151–175 (LGLSAAKFRQLDLLPVAHLHLSCIL), 176–199 (LDLVSYHIKGGETESLQIPNTTVL), 200–223 (HLVFHPNSLFSVQVNMSVNALGHL), 224–250 (QLSNIKLNDENCQRLMTFLSELTRGPT), 251–278 (LLNVTLQHIETTWKCSVKLFQFFWPRPV), 279–308 (EYLNIYNLTITERIDREEFTYSETALKSLM), 309–337 (IEHVKNQVFLFSKEALYSVFAEMNIKMLS), 338–361 (ISDTPFIHMVCPPSPSSFTFLNFT), 362–388 (QNVFTDSVFQGCSTLKRLQTLILQRNG), 389–414 (LKNFFKVALMTKNMSSLETLDVSLNS), 415–437 (LNSHAYDRTCAWAESILVLNLSS), 438–457 (NMLTGSVFRCLPPKVKVLDL), 458–478 (HNNRIMSIPKDVTHLQALQEL), 479–500 (NVASNSLTDLPGCGAFSSLSVL), and 501–524 (VIDHNSVSHPSEDFFQSCQNIRSL). The N-linked (GlcNAc...) asparagine glycan is linked to Asn-114. Cysteines 117 and 139 form a disulfide. Asn-144 carries N-linked (GlcNAc...) asparagine glycosylation. N-linked (GlcNAc...) asparagine glycosylation is found at Asn-195 and Asn-214. Cys-235 and Cys-265 are disulfide-bonded. 2 N-linked (GlcNAc...) asparagine glycosylation sites follow: Asn-253 and Asn-285. Cys-348 and Cys-373 are disulfide-bonded. N-linked (GlcNAc...) asparagine glycosylation is present at Asn-359. 2 N-linked (GlcNAc...) asparagine glycosylation sites follow: Asn-401 and Asn-434. Cys-424 and Cys-447 are oxidised to a cystine. Residues 525 to 576 (TAGNNPFQCTCELRDFVKNIGWVAREVVEGWPDSYRCDYPESSKGTALRDFH) form the LRRCT domain. Residues 585-605 (VLLTVTIGATMLVLAVTGAFL) form a helical membrane-spanning segment. The Cytoplasmic segment spans residues 606–795 (CLYFDLPWYV…ALVNEDDVKT (190 aa)). The 142-residue stretch at 640–781 (LQFHAFVSYS…LFWANLRASF (142 aa)) folds into the TIR domain.

Belongs to the Toll-like receptor family. In terms of assembly, homodimer (via cytoplasmic TIR domain). Heterodimer with TLR2 via their respective extracellular domains. Binds MYD88 via their respective TIR domains. Interacts with CD36, following CD36 stimulation by oxLDL or amyloid-beta 42, and forms a heterodimer with TLR4. The trimeric complex is internalized and triggers inflammatory response. LYN kinase activity facilitates TLR4:TLR6 heterodimerization and signal initiation. The heterodimer TLR2:TLR6 interacts with CD14 and CD36 in response to triacylated lipopeptides. As to expression, detected in thymus, spleen, ovary and lung. Expressed in macrohpages.

It localises to the cell membrane. The protein resides in the cytoplasmic vesicle. The protein localises to the phagosome membrane. It is found in the membrane raft. Its subcellular location is the golgi apparatus. Functionally, participates in the innate immune response to Gram-positive bacteria and fungi. Specifically recognizes diacylated and, to a lesser extent, triacylated lipopeptides. In response to diacylated lipopeptides, forms the activation cluster TLR2:TLR6:CD14:CD36, this cluster triggers signaling from the cell surface and subsequently is targeted to the Golgi in a lipid-raft dependent pathway. Acts via MYD88 and TRAF6, leading to NF-kappa-B activation, cytokine secretion and the inflammatory response. Recognizes mycoplasmal macrophage-activating lipopeptide-2kD (MALP-2), soluble tuberculosis factor (STF), phenol-soluble modulin (PSM) and B.burgdorferi outer surface protein A lipoprotein (OspA-L) cooperatively with TLR2. In complex with TLR4, promotes sterile inflammation in monocytes/macrophages in response to oxidized low-density lipoprotein (oxLDL) or amyloid-beta 42. In this context, the initial signal is provided by oxLDL- or amyloid-beta 42-binding to CD36. This event induces the formation of a heterodimer of TLR4 and TLR6, which is rapidly internalized and triggers inflammatory response, leading to the NF-kappa-B-dependent production of CXCL1, CXCL2 and CCL9 cytokines, via MYD88 signaling pathway, and CCL5 cytokine, via TICAM1 signaling pathway, as well as IL1B secretion. This Mus musculus (Mouse) protein is Toll-like receptor 6 (Tlr6).